The sequence spans 147 residues: D-aminoacyl-tRNA deacylase (147 aa).

The Gly-cisPro motif, important for rejection of L-amino acids signature appears at 136 to 137 (GP).

This sequence belongs to the DTD family. Homodimer.

Its subcellular location is the cytoplasm. It carries out the reaction glycyl-tRNA(Ala) + H2O = tRNA(Ala) + glycine + H(+). The catalysed reaction is a D-aminoacyl-tRNA + H2O = a tRNA + a D-alpha-amino acid + H(+). An aminoacyl-tRNA editing enzyme that deacylates mischarged D-aminoacyl-tRNAs. Also deacylates mischarged glycyl-tRNA(Ala), protecting cells against glycine mischarging by AlaRS. Acts via tRNA-based rather than protein-based catalysis; rejects L-amino acids rather than detecting D-amino acids in the active site. By recycling D-aminoacyl-tRNA to D-amino acids and free tRNA molecules, this enzyme counteracts the toxicity associated with the formation of D-aminoacyl-tRNA entities in vivo and helps enforce protein L-homochirality. The protein is D-aminoacyl-tRNA deacylase of Streptococcus pyogenes serotype M1.